A 253-amino-acid chain; its full sequence is MIPDALTPAGRELLRRGADDLGLDVAPHEEQFARLLALLRAGNERLNLTALKTEEDIVLKHFVDSLTTLRGGHLDGEWKTLDLGTGAGFPALPLAILRPELRLTPLDSIRKKIDFVRETAAELGLSNVTPQVGRAETLGQSAEHRGSYDRVVARAVAALPVLAELALPLLRVGGVFVAQKGPLSEEELDAGRRAAGEVGGRIIEVDPFTLPVSGDARTLIVLEKQRPTPAKYPRREGVPTHQPLFWKAKEQSR.

S-adenosyl-L-methionine is bound by residues G84, F89, 135–136 (AE), and R154. The tract at residues 228–253 (TPAKYPRREGVPTHQPLFWKAKEQSR) is disordered.

The protein belongs to the methyltransferase superfamily. RNA methyltransferase RsmG family.

Its subcellular location is the cytoplasm. Specifically methylates the N7 position of a guanine in 16S rRNA. The sequence is that of Ribosomal RNA small subunit methyltransferase G from Deinococcus radiodurans (strain ATCC 13939 / DSM 20539 / JCM 16871 / CCUG 27074 / LMG 4051 / NBRC 15346 / NCIMB 9279 / VKM B-1422 / R1).